Here is a 285-residue protein sequence, read N- to C-terminus: NADH-cytochrome b5 reductase 1 (285 aa).

The chain crosses the membrane as a helical span at residues 7 to 23 (LATFSVLVLFYKLFTYS). The region spanning 40 to 144 (TEFREFELVE…SGPRGFYEYV (105 aa)) is the FAD-binding FR-type domain. FAD is bound by residues 124–139 (GDMK…GPRG) and 150–182 (HLAM…RVTL).

The protein belongs to the flavoprotein pyridine nucleotide cytochrome reductase family. In terms of assembly, monomer. Component of the 2-(3-amino-3-carboxypropyl)histidine synthase complex composed of DPH1, DPH2, DPH3 and a NADH-dependent reductase, predominantly CBR1. Requires FAD as cofactor.

Its subcellular location is the mitochondrion outer membrane. It carries out the reaction 2 Fe(III)-[cytochrome b5] + NADH = 2 Fe(II)-[cytochrome b5] + NAD(+) + H(+). It catalyses the reaction 2 Fe(3+)-[Dph3] + NADH = 2 Fe(2+)-[Dph3] + NAD(+) + H(+). It functions in the pathway protein modification; peptidyl-diphthamide biosynthesis. Its function is as follows. NADH-dependent reductase for DPH3 and cytochrome b5. Required for the first step of diphthamide biosynthesis, a post-translational modification of histidine which occurs in elongation factor 2. DPH1 and DPH2 transfer a 3-amino-3-carboxypropyl (ACP) group from S-adenosyl-L-methionine (SAM) to a histidine residue, the reaction is assisted by a reduction system comprising DPH3 and a NADH-dependent reductase, predominantly CBR1. By reducing DPH3, also involved in the formation of the tRNA wobble base modification mcm5s 2U (5-methoxycarbonylmethyl-2-thiouridine), mediated by the elongator complex. The cytochrome b5/NADH cytochrome b5 reductase electron transfer system supports the catalytic activity of several sterol biosynthetic enzymes. The protein is NADH-cytochrome b5 reductase 1 (CBR1) of Candida glabrata (strain ATCC 2001 / BCRC 20586 / JCM 3761 / NBRC 0622 / NRRL Y-65 / CBS 138) (Yeast).